A 133-amino-acid polypeptide reads, in one-letter code: Large ribosomal subunit protein uL22 (133 aa).

The protein belongs to the universal ribosomal protein uL22 family. In terms of assembly, part of the 50S ribosomal subunit.

In terms of biological role, this protein binds specifically to 23S rRNA; its binding is stimulated by other ribosomal proteins, e.g. L4, L17, and L20. It is important during the early stages of 50S assembly. It makes multiple contacts with different domains of the 23S rRNA in the assembled 50S subunit and ribosome. Functionally, the globular domain of the protein is located near the polypeptide exit tunnel on the outside of the subunit, while an extended beta-hairpin is found that lines the wall of the exit tunnel in the center of the 70S ribosome. This is Large ribosomal subunit protein uL22 from Nocardia farcinica (strain IFM 10152).